The primary structure comprises 193 residues: Signal peptidase I T (193 aa).

Residues 1 to 25 (MTEEKNTNTEKTAKKKTNTYLEWGK) lie on the Cytoplasmic side of the membrane. Residues 26 to 42 (AIVIAVLLALLIRHFLF) traverse the membrane as a helical segment. Residues 43–193 (EPYLVEGSSM…FPFNEMRQTK (151 aa)) are Extracellular-facing. Residues Ser-51 and Lys-93 contribute to the active site.

Belongs to the peptidase S26 family.

It is found in the cell membrane. The catalysed reaction is Cleavage of hydrophobic, N-terminal signal or leader sequences from secreted and periplasmic proteins.. This Bacillus subtilis (strain 168) protein is Signal peptidase I T (sipT).